The sequence spans 332 residues: Glyceraldehyde-3-phosphate dehydrogenase (332 aa).

Residues 10-11 (RI), Asp36, Lys81, and Ser116 contribute to the NAD(+) site. Residues 150 to 152 (SCT), Thr181, Arg197, 210 to 211 (TK), and Arg233 each bind D-glyceraldehyde 3-phosphate. The active-site Nucleophile is the Cys151. Asn314 provides a ligand contact to NAD(+).

Belongs to the glyceraldehyde-3-phosphate dehydrogenase family. In terms of assembly, homotetramer.

It is found in the cytoplasm. It carries out the reaction D-glyceraldehyde 3-phosphate + phosphate + NAD(+) = (2R)-3-phospho-glyceroyl phosphate + NADH + H(+). The protein operates within carbohydrate degradation; glycolysis; pyruvate from D-glyceraldehyde 3-phosphate: step 1/5. Its function is as follows. Catalyzes the oxidative phosphorylation of glyceraldehyde 3-phosphate (G3P) to 1,3-bisphosphoglycerate (BPG) using the cofactor NAD. The first reaction step involves the formation of a hemiacetal intermediate between G3P and a cysteine residue, and this hemiacetal intermediate is then oxidized to a thioester, with concomitant reduction of NAD to NADH. The reduced NADH is then exchanged with the second NAD, and the thioester is attacked by a nucleophilic inorganic phosphate to produce BPG. In Helicobacter pylori (strain J99 / ATCC 700824) (Campylobacter pylori J99), this protein is Glyceraldehyde-3-phosphate dehydrogenase (gapA).